A 1441-amino-acid polypeptide reads, in one-letter code: Probable ubiquitin-conjugating enzyme E2 R521 (1441 aa).

Residues 20–40 form a helical membrane-spanning segment; that stretch reads YIHHIIINYITNSILYFFLIM. Residues 63–89 adopt a coiled-coil conformation; sequence NQSKLVNTLDIIKDEINKWEEKNTDKD. Residues 180 to 199 are compositionally biased toward basic and acidic residues; that stretch reads VSKDKMKDKSESNSEHEQES. Disordered stretches follow at residues 180 to 207 and 283 to 305; these read VSKD…SNEI and IFGK…MSKV. Low complexity predominate over residues 286–303; it reads KSKNSGPSSSKTSISSMS. A coiled-coil region spans residues 340–368; the sequence is TTNEDNNDLDNLINEVERLVQETKDQETK. Residues 505-538 are compositionally biased toward low complexity; the sequence is TVEPVQEVAEEPVQQEVAEEPVQQEVAEEPVQQE. 2 disordered regions span residues 505-554 and 577-605; these read TVEP…PVQK and NDFS…NNLG. Positions 539 to 549 are enriched in acidic residues; sequence VAEEPVQEVAE. The region spanning 1217-1380 is the UBC core domain; that stretch reads AISRELLSHS…VRFNCMKWAM (164 aa). The active-site Glycyl thioester intermediate is the cysteine 1306.

This sequence belongs to the ubiquitin-conjugating enzyme family.

The protein localises to the membrane. It carries out the reaction S-ubiquitinyl-[E1 ubiquitin-activating enzyme]-L-cysteine + [E2 ubiquitin-conjugating enzyme]-L-cysteine = [E1 ubiquitin-activating enzyme]-L-cysteine + S-ubiquitinyl-[E2 ubiquitin-conjugating enzyme]-L-cysteine.. Its pathway is protein modification; protein ubiquitination. In terms of biological role, catalyzes the covalent attachment of ubiquitin to other proteins. The polypeptide is Probable ubiquitin-conjugating enzyme E2 R521 (Acanthamoeba polyphaga (Amoeba)).